Reading from the N-terminus, the 385-residue chain is Beta sliding clamp (385 aa).

Belongs to the beta sliding clamp family. Forms a ring-shaped head-to-tail homodimer around DNA which binds and tethers DNA polymerases and other proteins to the DNA. The DNA replisome complex has a single clamp-loading complex (3 tau and 1 each of delta, delta', psi and chi subunits) which binds 3 Pol III cores (1 core on the leading strand and 2 on the lagging strand) each with a beta sliding clamp dimer. Additional proteins in the replisome are other copies of gamma, psi and chi, Ssb, DNA helicase and RNA primase.

The protein resides in the cytoplasm. In terms of biological role, confers DNA tethering and processivity to DNA polymerases and other proteins. Acts as a clamp, forming a ring around DNA (a reaction catalyzed by the clamp-loading complex) which diffuses in an ATP-independent manner freely and bidirectionally along dsDNA. Initially characterized for its ability to contact the catalytic subunit of DNA polymerase III (Pol III), a complex, multichain enzyme responsible for most of the replicative synthesis in bacteria; Pol III exhibits 3'-5' exonuclease proofreading activity. The beta chain is required for initiation of replication as well as for processivity of DNA replication. The sequence is that of Beta sliding clamp (dnaN) from Borreliella burgdorferi (strain ATCC 35210 / DSM 4680 / CIP 102532 / B31) (Borrelia burgdorferi).